We begin with the raw amino-acid sequence, 432 residues long: Glutamyl-tRNA reductase (432 aa).

Residues 49–52, Ser107, 112–114, and Gln118 contribute to the substrate site; these read TCNR and ETQ. The Nucleophile role is filled by Cys50. 186–191 is a binding site for NADP(+); that stretch reads GAGEMG.

The protein belongs to the glutamyl-tRNA reductase family. Homodimer.

The enzyme catalyses (S)-4-amino-5-oxopentanoate + tRNA(Glu) + NADP(+) = L-glutamyl-tRNA(Glu) + NADPH + H(+). It functions in the pathway porphyrin-containing compound metabolism; protoporphyrin-IX biosynthesis; 5-aminolevulinate from L-glutamyl-tRNA(Glu): step 1/2. Its function is as follows. Catalyzes the NADPH-dependent reduction of glutamyl-tRNA(Glu) to glutamate 1-semialdehyde (GSA). The protein is Glutamyl-tRNA reductase of Campylobacter jejuni subsp. doylei (strain ATCC BAA-1458 / RM4099 / 269.97).